A 245-amino-acid polypeptide reads, in one-letter code: DNA polymerase sliding clamp (245 aa).

The protein belongs to the PCNA family. As to quaternary structure, homotrimer. The subunits circularize to form a toroid; DNA passes through its center. Replication factor C (RFC) is required to load the toroid on the DNA.

Functionally, sliding clamp subunit that acts as a moving platform for DNA processing. Responsible for tethering the catalytic subunit of DNA polymerase and other proteins to DNA during high-speed replication. The polypeptide is DNA polymerase sliding clamp (Methanosarcina acetivorans (strain ATCC 35395 / DSM 2834 / JCM 12185 / C2A)).